A 144-amino-acid chain; its full sequence is Large ribosomal subunit protein uL15 (144 aa).

Positions 1–53 (MRLNTLSPADGSKHAPKRLGRGIGSGLGKTGGRGHKGQNSRSGGGVRRGFEGG) are disordered. Positions 21–31 (RGIGSGLGKTG) are enriched in gly residues.

Belongs to the universal ribosomal protein uL15 family. In terms of assembly, part of the 50S ribosomal subunit.

Functionally, binds to the 23S rRNA. The sequence is that of Large ribosomal subunit protein uL15 from Erwinia tasmaniensis (strain DSM 17950 / CFBP 7177 / CIP 109463 / NCPPB 4357 / Et1/99).